We begin with the raw amino-acid sequence, 101 residues long: Enhancer of yellow 2 transcription factor (101 aa).

The protein belongs to the ENY2 family. In terms of assembly, component of the nuclear pore complex (NPC)-associated AMEX complex (anchoring and mRNA export complex), composed of at least e(y)2 and xmas-2. Component of the SAGA transcription coactivator-HAT complexes, at least composed of Ada2b, e(y)2, Pcaf/Gcn5, Taf10 and Nipped-A/Trrap. Within the SAGA complex, e(y)2, Sgf11, and not/nonstop form an additional subcomplex of SAGA called the DUB module (deubiquitination module). Component of the THO complex, composed of at least e(y)2, HPR1, THO2, THOC5, THOC6 and THOC7. Interacts with e(y)1. Interacts with su(Hw) (via zinc fingers). Interacts with xmas-2; required for localization to the nuclear periphery. Interacts with the nuclear pore complex (NPC).

The protein localises to the nucleus. It localises to the nucleoplasm. Its subcellular location is the cytoplasm. Functionally, involved in mRNA export coupled transcription activation by association with both the AMEX and the SAGA complexes. The SAGA complex is a multiprotein complex that activates transcription by remodeling chromatin and mediating histone acetylation and deubiquitination. Within the SAGA complex, participates in a subcomplex that specifically deubiquitinates histone H2B. The SAGA complex is recruited to specific gene promoters by activators, where it is required for transcription. Required for nuclear receptor-mediated transactivation. Involved in transcription elongation by recruiting the THO complex onto nascent mRNA. The AMEX complex functions in docking export-competent ribonucleoprotein particles (mRNPs) to the nuclear entrance of the nuclear pore complex (nuclear basket). AMEX participates in mRNA export and accurate chromatin positioning in the nucleus by tethering genes to the nuclear periphery. The polypeptide is Enhancer of yellow 2 transcription factor (Drosophila simulans (Fruit fly)).